The following is a 463-amino-acid chain: MNLATIKVTLPELIGRYQSQADFISIRLEQSEGTQISLRSDQVETLSEGIAMGGQVRVCHQGGWGFASFNRWEQLRQRLEEAIAAARLIGDDETLLAPIDPVQQTFINPLTGKDPRQISLADKKALCDHYNDLLRGTSDKITTTHVRYSDSQQTVLLATSEGTLLEQCWWDLEMRFAATAKDGNGVQVGRETTGSRRGYGDLENLDQVVQGAAQRAVKALTLPTVQGKTYPVVIDPILTGLFVHEAFGHLSEADMLYENPDFLEVMSLGRRFGPPELQIFDGAAPPGHRGSYGFDDEGVPASTTQLIKDGELVGRLHSRETAGKLGEKPTGNARCLNYHYPPIVRMTNTWIGRGETPVANLLDGIEEGIYAQNWLGGMTNGEMFTFSAGEAWMIRHGQLAEPVKDVTLSGNVFKTLANIEAIADDFYWDESGGCGKGGQNGLAVGCGGPSLRIRDVVVGGDAA.

Belongs to the peptidase U62 family.

Probable metalloprotease. This chain is Metalloprotease slr0863, found in Synechocystis sp. (strain ATCC 27184 / PCC 6803 / Kazusa).